The sequence spans 346 residues: Phosphoribosylformylglycinamidine cyclo-ligase (346 aa).

The protein belongs to the AIR synthase family.

The protein resides in the cytoplasm. It carries out the reaction 2-formamido-N(1)-(5-O-phospho-beta-D-ribosyl)acetamidine + ATP = 5-amino-1-(5-phospho-beta-D-ribosyl)imidazole + ADP + phosphate + H(+). Its pathway is purine metabolism; IMP biosynthesis via de novo pathway; 5-amino-1-(5-phospho-D-ribosyl)imidazole from N(2)-formyl-N(1)-(5-phospho-D-ribosyl)glycinamide: step 2/2. This chain is Phosphoribosylformylglycinamidine cyclo-ligase, found in Methylobacillus flagellatus (strain ATCC 51484 / DSM 6875 / VKM B-1610 / KT).